The following is a 273-amino-acid chain: NH(3)-dependent NAD(+) synthetase (273 aa).

An ATP-binding site is contributed by 46 to 53; the sequence is GISGGQDS. Aspartate 52 contributes to the Mg(2+) binding site. Arginine 139 provides a ligand contact to deamido-NAD(+). Threonine 159 contributes to the ATP binding site. Glutamate 164 provides a ligand contact to Mg(2+). Deamido-NAD(+) contacts are provided by lysine 172 and aspartate 179. Positions 188 and 210 each coordinate ATP. 259–260 contacts deamido-NAD(+); that stretch reads HK.

It belongs to the NAD synthetase family. In terms of assembly, homodimer.

The enzyme catalyses deamido-NAD(+) + NH4(+) + ATP = AMP + diphosphate + NAD(+) + H(+). It functions in the pathway cofactor biosynthesis; NAD(+) biosynthesis; NAD(+) from deamido-NAD(+) (ammonia route): step 1/1. Its function is as follows. Catalyzes the ATP-dependent amidation of deamido-NAD to form NAD. Uses ammonia as a nitrogen source. This is NH(3)-dependent NAD(+) synthetase from Mycobacteroides abscessus (strain ATCC 19977 / DSM 44196 / CCUG 20993 / CIP 104536 / JCM 13569 / NCTC 13031 / TMC 1543 / L948) (Mycobacterium abscessus).